The following is an 81-amino-acid chain: Cytochrome b559 subunit alpha (81 aa).

A helical membrane pass occupies residues 22-36; the sequence is VIHSITIPSLFIAGW. Residue histidine 24 coordinates heme.

It belongs to the PsbE/PsbF family. As to quaternary structure, heterodimer of an alpha subunit and a beta subunit. PSII is composed of 1 copy each of membrane proteins PsbA, PsbB, PsbC, PsbD, PsbE, PsbF, PsbH, PsbI, PsbJ, PsbK, PsbL, PsbM, PsbT, PsbX, PsbY, PsbZ, Psb30/Ycf12, at least 3 peripheral proteins of the oxygen-evolving complex and a large number of cofactors. It forms dimeric complexes. Heme b serves as cofactor.

It is found in the plastid. The protein localises to the chloroplast thylakoid membrane. Functionally, this b-type cytochrome is tightly associated with the reaction center of photosystem II (PSII). PSII is a light-driven water:plastoquinone oxidoreductase that uses light energy to abstract electrons from H(2)O, generating O(2) and a proton gradient subsequently used for ATP formation. It consists of a core antenna complex that captures photons, and an electron transfer chain that converts photonic excitation into a charge separation. This is Cytochrome b559 subunit alpha from Cyanidioschyzon merolae (strain NIES-3377 / 10D) (Unicellular red alga).